Reading from the N-terminus, the 520-residue chain is tRNA (guanine-N(7)-)-methyltransferase non-catalytic subunit TRM82 (520 aa).

A disordered region spans residues 51–102 (PLDSEISPDRASSAGTCAEPPEKRRKLTPPVDESGEAQTEQSAKAKARKSQT). WD repeat units follow at residues 105 to 145 (QAWS…KLTQ), 244 to 291 (GHVS…HIIH), and 296 to 338 (GHTS…QTIP).

Belongs to the WD repeat TRM82 family. Forms a heterodimer with the catalytic subunit TRM8.

Its subcellular location is the nucleus. The protein operates within tRNA modification; N(7)-methylguanine-tRNA biosynthesis. Its function is as follows. Required for the formation of N(7)-methylguanine at position 46 (m7G46) in tRNA. In the complex, it is required to stabilize and induce conformational changes of the catalytic subunit. The sequence is that of tRNA (guanine-N(7)-)-methyltransferase non-catalytic subunit TRM82 from Coccidioides immitis (strain RS) (Valley fever fungus).